A 192-amino-acid polypeptide reads, in one-letter code: MGKTPEDFERHTMRSLIFVLALSVFTCSGFPVYDYELPVTEEALNASIARINSQTWGPNLYGVVRSHVRHVDMWNSNDYRLELQLSIRETECTKASGRDPFTCGFKVGPFVPTAVCKSVVEVSSEQIVNVIVRCHQSTFSSESMSSEEMTYMLMTDPRKRGSSRSEAFSSRGRGHSNGDWRKPDYTSPGKVE.

An N-terminal signal peptide occupies residues 1–29 (MGKTPEDFERHTMRSLIFVLALSVFTCSG). Intrachain disulfides connect cysteine 92/cysteine 103 and cysteine 116/cysteine 134. Residues 155 to 192 (TDPRKRGSSRSEAFSSRGRGHSNGDWRKPDYTSPGKVE) are disordered.

It belongs to the SPP2 family. In terms of processing, multiply phosphorylated at serine residues.

It localises to the secreted. Could coordinate an aspect of bone turnover. The sequence is that of Secreted phosphoprotein 24 (SPP2) from Gallus gallus (Chicken).